A 345-amino-acid chain; its full sequence is Eukaryotic translation initiation factor 3 subunit F (345 aa).

Residues 30 to 166 (VVIHPQALFS…TRAYISAPVG (137 aa)) form the MPN domain. The segment at 308–345 (GGESGNAESGQRGGQRGGKGGRGGQQRTQDRSGEEARA) is disordered. Positions 318 to 331 (QRGGQRGGKGGRGG) are enriched in gly residues. Over residues 335-345 (TQDRSGEEARA) the composition is skewed to basic and acidic residues.

Belongs to the eIF-3 subunit F family. Component of the eukaryotic translation initiation factor 3 (eIF-3) complex.

It localises to the cytoplasm. In terms of biological role, component of the eukaryotic translation initiation factor 3 (eIF-3) complex, which is involved in protein synthesis of a specialized repertoire of mRNAs and, together with other initiation factors, stimulates binding of mRNA and methionyl-tRNAi to the 40S ribosome. The eIF-3 complex specifically targets and initiates translation of a subset of mRNAs involved in cell proliferation. This is Eukaryotic translation initiation factor 3 subunit F from Aspergillus oryzae (strain ATCC 42149 / RIB 40) (Yellow koji mold).